Here is a 181-residue protein sequence, read N- to C-terminus: UPF0397 protein STER_0346 (181 aa).

5 consecutive transmembrane segments (helical) span residues 11-31, 45-65, 72-92, 109-129, and 147-167; these read ATGI…IPIF, LFSV…GHAL, GNIS…IGLF, IWFN…VTPI, and FVAG…LLAI.

This sequence belongs to the UPF0397 family.

Its subcellular location is the cell membrane. The chain is UPF0397 protein STER_0346 from Streptococcus thermophilus (strain ATCC BAA-491 / LMD-9).